The sequence spans 131 residues: Small ribosomal subunit protein uS9 (131 aa).

The protein belongs to the universal ribosomal protein uS9 family.

The sequence is that of Small ribosomal subunit protein uS9 from Actinobacillus succinogenes (strain ATCC 55618 / DSM 22257 / CCUG 43843 / 130Z).